The primary structure comprises 361 residues: Mitogen-activated protein kinase 14A (361 aa).

Positions 25 to 309 (YQNLSPVGSG…AAEALAHPYF (285 aa)) constitute a Protein kinase domain. ATP is bound by residues 31-39 (VGSGAYGTV) and lysine 54. Aspartate 151 serves as the catalytic Proton acceptor. Phosphothreonine; by MAP2K6 is present on threonine 181. The TXY signature appears at 181–183 (TGY). At tyrosine 183 the chain carries Phosphotyrosine; by MAP2K6.

It belongs to the protein kinase superfamily. CMGC Ser/Thr protein kinase family. MAP kinase subfamily. Mg(2+) is required as a cofactor. In terms of processing, dually phosphorylated on Thr-181 and Tyr-183, which activates the enzyme. In terms of tissue distribution, exclusively expressed in the ovary.

It is found in the cytoplasm. The protein localises to the nucleus. The catalysed reaction is L-seryl-[protein] + ATP = O-phospho-L-seryl-[protein] + ADP + H(+). It carries out the reaction L-threonyl-[protein] + ATP = O-phospho-L-threonyl-[protein] + ADP + H(+). Its activity is regulated as follows. Activated by threonine and tyrosine phosphorylation by the dual specificity kinase, MKK6. Its function is as follows. Serine/threonine kinase which acts as an essential component of the MAP kinase signal transduction pathway. Mapk14a is one of the four p38 MAPKs which play an important role in the cascades of cellular responses evoked by extracellular stimuli such as pro-inflammatory cytokines or physical stress leading to direct activation of transcription factors. Accordingly, p38 MAPKs phosphorylate a broad range of proteins and it has been estimated that they may have approximately 200 to 300 substrates each. Some of the targets are downstream kinases which are activated through phosphorylation and further phosphorylate additional targets. This is Mitogen-activated protein kinase 14A (mapk14a) from Cyprinus carpio (Common carp).